Here is a 508-residue protein sequence, read N- to C-terminus: Pyruvate kinase (508 aa).

Arg-56 provides a ligand contact to substrate. K(+) contacts are provided by Asn-58, Ser-60, Asp-90, and Thr-91. Asn-58–His-61 contacts ATP. 2 residues coordinate ATP: Arg-97 and Lys-185. Glu-251 provides a ligand contact to Mg(2+). Positions 274, 275, and 307 each coordinate substrate. Asp-275 provides a ligand contact to Mg(2+).

It belongs to the pyruvate kinase family. Homotetramer. The cofactor is Mg(2+). Requires K(+) as cofactor.

The catalysed reaction is pyruvate + ATP = phosphoenolpyruvate + ADP + H(+). It functions in the pathway carbohydrate degradation; glycolysis; pyruvate from D-glyceraldehyde 3-phosphate: step 5/5. With respect to regulation, regulated by phosphoenolpyruvate substrate and is allosterically activated by ribose-5-phosphate, AMP and other nucleoside monophosphates but not by fructose-1,6-bisphosphate. The chain is Pyruvate kinase (pyk) from Mycoplasma genitalium (strain ATCC 33530 / DSM 19775 / NCTC 10195 / G37) (Mycoplasmoides genitalium).